Here is a 116-residue protein sequence, read N- to C-terminus: Large ribosomal subunit protein bL17 (116 aa).

This sequence belongs to the bacterial ribosomal protein bL17 family. In terms of assembly, part of the 50S ribosomal subunit. Contacts protein L32.

The chain is Large ribosomal subunit protein bL17 from Prochlorococcus marinus subsp. pastoris (strain CCMP1986 / NIES-2087 / MED4).